The sequence spans 851 residues: Nucleolar RNA helicase 2 (851 aa).

Residues 1–260 (MPGKLRSGAK…IPVEQKEGAF (260 aa)) are disordered. A phosphoserine mark is found at serine 7 and serine 13. Basic and acidic residues-rich tracts occupy residues 26–42 (PSEK…KTEE) and 99–113 (EPLE…KEII). An N6-acetyllysine modification is found at lysine 39. 3 consecutive repeat copies span residues 117–153 (PSEE…GLSQ), 154–190 (PSEE…GLSQ), and 191–227 (PSEE…GLSQ). Positions 117-227 (PSEEEADMPK…SPRLKDGLSQ (111 aa)) are 3 X 37 AA tandem repeats. Serine 118 carries the phosphoserine modification. Positions 133 to 145 (GKEANGDAGEKSP) are enriched in basic and acidic residues. An N6-acetyllysine modification is found at lysine 134. Phosphoserine occurs at positions 144, 155, 181, 192, 218, 236, 243, 244, and 245. Residues 170 to 182 (GKEANGDAGEKSP) show a composition bias toward basic and acidic residues. The segment covering 207–223 (GKEASGDAGEKSPRLKD) has biased composition (basic and acidic residues). Positions 226–237 (SQPSEPKSNSSD) are enriched in polar residues. Positions 246 to 257 (ETEKEIPVEQKE) are enriched in basic and acidic residues. A Q motif motif is present at residues 258 to 286 (GAFSNFPISEETVKLLKARGVNFLFPIQA). Positions 289–468 (FHHVYSGKDL…KKYMKSTYEQ (180 aa)) constitute a Helicase ATP-binding domain. 302-309 (ARTGTGKT) is a binding site for ATP. A Phosphothreonine modification is found at threonine 368. Positions 411–414 (DEVD) match the DEAD box motif. The 145-residue stretch at 501-645 (DVIRVYSGHQ…GVPSATEIIK (145 aa)) folds into the Helicase C-terminal domain. A Phosphoserine modification is found at serine 639. Lysine 672 is subject to N6-acetyllysine. A disordered region spans residues 783–851 (QPELEGPPDG…KRSFSKAFGQ (69 aa)). 3 tandem repeats follow at residues 807-811 (FRGQR), 817-823 (FRGQGQR), and 829-833 (FRGQR). The tract at residues 807–833 (FRGQRGGSRNFRGQGQRGGSRNFRGQR) is 3 X 5 AA repeats. Residue lysine 847 is modified to N6-acetyllysine.

It belongs to the DEAD box helicase family. DDX21/DDX50 subfamily. Homodimer; homodimerizes via its N-terminus. Found in a multi-helicase-TICAM1 complex at least composed of DHX36, DDX1, DDX21 and TICAM1; this complex exists in resting cells with or without poly(I:C) RNA ligand stimulation. Interacts (via C-terminus) with TICAM1 (via TIR domain). Interacts with DHX36 (via C-terminus); this interaction serves as bridges to TICAM1. Interacts (via C-terminus) with DDX1 (via B30.2/SPRY domain); this interaction serves as bridges to TICAM1. Component of the B-WICH complex, at least composed of SMARCA5/SNF2H, BAZ1B/WSTF, SF3B1, DEK, MYO1C, ERCC6, MYBBP1A and DDX21. Interacts with C1QBP. Interacts with JUN. Interacts with WDR46. Interacts with MCM3AP. Interacts with WDR43. Interacts with KPNA3. Interacts with GID4. In terms of processing, acetylation by CREBBP/CBP inhibits the helicase activity. Deacetylation by SIRT7 promotes the helicase activity and overcomes R-loop-mediated stalling of RNA polymerases. Highly expressed in liver and testis. Expressed at lower level in brain, lungs, and skeletal muscle.

Its subcellular location is the nucleus. The protein resides in the nucleolus. The protein localises to the nucleoplasm. It is found in the cytoplasm. It localises to the cytosol. Its subcellular location is the mitochondrion. The enzyme catalyses ATP + H2O = ADP + phosphate + H(+). Its activity is regulated as follows. Acetylation inhibits the helicase activity. Its function is as follows. RNA helicase that acts as a sensor of the transcriptional status of both RNA polymerase (Pol) I and II: promotes ribosomal RNA (rRNA) processing and transcription from polymerase II (Pol II). Binds various RNAs, such as rRNAs, snoRNAs, 7SK and, at lower extent, mRNAs. In the nucleolus, localizes to rDNA locus, where it directly binds rRNAs and snoRNAs, and promotes rRNA transcription, processing and modification. Required for rRNA 2'-O-methylation, possibly by promoting the recruitment of late-acting snoRNAs SNORD56 and SNORD58 with pre-ribosomal complexes. In the nucleoplasm, binds 7SK RNA and is recruited to the promoters of Pol II-transcribed genes: acts by facilitating the release of P-TEFb from inhibitory 7SK snRNP in a manner that is dependent on its helicase activity, thereby promoting transcription of its target genes. Functions as cofactor for JUN-activated transcription: required for phosphorylation of JUN at 'Ser-77'. Can unwind double-stranded RNA (helicase) and can fold or introduce a secondary structure to a single-stranded RNA (foldase). Together with SIRT7, required to prevent R-loop-associated DNA damage and transcription-associated genomic instability: deacetylation by SIRT7 activates the helicase activity, thereby overcoming R-loop-mediated stalling of RNA polymerases. Involved in rRNA processing. May bind to specific miRNA hairpins. Component of a multi-helicase-TICAM1 complex that acts as a cytoplasmic sensor of viral double-stranded RNA (dsRNA) and plays a role in the activation of a cascade of antiviral responses including the induction of pro-inflammatory cytokines via the adapter molecule TICAM1. In Mus musculus (Mouse), this protein is Nucleolar RNA helicase 2 (Ddx21).